The primary structure comprises 139 residues: MRVLGLDVGDKTIGVAISDVSSTIAQGITTIRRKSFVEDVKAIEEIVKKYSVEKVVVGLPKNMNGSIGPQGEKVIKFGEKLREVLRIPVVFWDERLTTLQAERFLIEGVDMSRGKRKKVIDKLAATIILQSYLDSQKNS.

Belongs to the YqgF nuclease family.

It is found in the cytoplasm. Its function is as follows. Could be a nuclease involved in processing of the 5'-end of pre-16S rRNA. This is Putative pre-16S rRNA nuclease from Caldanaerobacter subterraneus subsp. tengcongensis (strain DSM 15242 / JCM 11007 / NBRC 100824 / MB4) (Thermoanaerobacter tengcongensis).